A 608-amino-acid polypeptide reads, in one-letter code: Glutamine--fructose-6-phosphate aminotransferase [isomerizing] (608 aa).

The Nucleophile; for GATase activity role is filled by Cys2. Positions 2–217 constitute a Glutamine amidotransferase type-2 domain; that stretch reads CGIVGYSGKK…DKEFVVLTSE (216 aa). 2 SIS domains span residues 285–424 and 453–598; these read TKEQ…NKNT and KVQK…VDKP. Lys603 serves as the catalytic For Fru-6P isomerization activity.

As to quaternary structure, homodimer.

Its subcellular location is the cytoplasm. The catalysed reaction is D-fructose 6-phosphate + L-glutamine = D-glucosamine 6-phosphate + L-glutamate. Its function is as follows. Catalyzes the first step in hexosamine metabolism, converting fructose-6P into glucosamine-6P using glutamine as a nitrogen source. This Clostridium acetobutylicum (strain ATCC 824 / DSM 792 / JCM 1419 / IAM 19013 / LMG 5710 / NBRC 13948 / NRRL B-527 / VKM B-1787 / 2291 / W) protein is Glutamine--fructose-6-phosphate aminotransferase [isomerizing].